We begin with the raw amino-acid sequence, 395 residues long: XK-related protein 8 (395 aa).

The Cytoplasmic segment spans residues Met1–Asp12. Residues Leu13–Ala33 traverse the membrane as a helical segment. Over Ala34–Ala47 the chain is Extracellular. The helical transmembrane segment at Leu48–Leu68 threads the bilayer. Topologically, residues Arg69 to Arg158 are cytoplasmic. The chain crosses the membrane as a helical span at residues Ala159–Leu179. At Asp180 to Ser200 the chain is on the extracellular side. A helical membrane pass occupies residues Val201–Phe221. Residues Ser222–Ala223 lie on the Cytoplasmic side of the membrane. Residues Leu224–Val244 form a helical membrane-spanning segment. Topologically, residues Trp245 to Glu258 are extracellular. The helical transmembrane segment at Trp259–Gly279 threads the bilayer. Residues Arg280 to Arg284 lie on the Cytoplasmic side of the membrane. A helical membrane pass occupies residues Ala285–Thr305. Residues His306 to Ser312 lie on the Extracellular side of the membrane. A helical membrane pass occupies residues Gly313 to Leu333. The Cytoplasmic segment spans residues Arg334–Gly395. Position 362 is a phosphoserine (Ser362). Phosphothreonine is present on Thr375.

It belongs to the XK family. As to quaternary structure, interacts with BSG and NPTN; which act as chaperones to localize XKR8 at the cell membrane. In terms of assembly, homodimer. In terms of processing, undergoes proteolytic processing by caspase-3 (CASP3), leading to its activation. Phosphorylation at Thr-375 activates the phospholipid scramblase activity.

It is found in the cell membrane. Its subcellular location is the cytoplasm. The protein resides in the perinuclear region. It carries out the reaction a 1,2-diacyl-sn-glycero-3-phospho-L-serine(in) = a 1,2-diacyl-sn-glycero-3-phospho-L-serine(out). Its activity is regulated as follows. Activated upon caspase cleavage to generate the XK-related protein 8, processed form. Does not act prior the onset of apoptosis. In terms of biological role, phospholipid scramblase that promotes phosphatidylserine exposure on apoptotic cell surface. Phosphatidylserine is a specific marker only present at the surface of apoptotic cells and acts as a specific signal for engulfment. Required for the clearance of apoptotic cells, such as engulfment of apoptotic germ cells by Sertoli cells, clearance of senescent neutrophils or regulation of bipolar cell numbers in the retina. Has no effect on calcium-induced exposure of phosphatidylserine. Promotes myoblast differentiation and survival. In Pan troglodytes (Chimpanzee), this protein is XK-related protein 8.